The sequence spans 289 residues: Shikimate dehydrogenase (NADP(+)) (289 aa).

Shikimate is bound by residues 20–22 and S67; that span reads SIS. Catalysis depends on K71, which acts as the Proton acceptor. D83 serves as a coordination point for NADP(+). Positions 92 and 107 each coordinate shikimate. Residues 132 to 136 and V230 each bind NADP(+); that span reads GGGGA. Y232 lines the shikimate pocket. Position 253 (G253) interacts with NADP(+).

The protein belongs to the shikimate dehydrogenase family. Homodimer.

It catalyses the reaction shikimate + NADP(+) = 3-dehydroshikimate + NADPH + H(+). Its pathway is metabolic intermediate biosynthesis; chorismate biosynthesis; chorismate from D-erythrose 4-phosphate and phosphoenolpyruvate: step 4/7. Its function is as follows. Involved in the biosynthesis of the chorismate, which leads to the biosynthesis of aromatic amino acids. Catalyzes the reversible NADPH linked reduction of 3-dehydroshikimate (DHSA) to yield shikimate (SA). The protein is Shikimate dehydrogenase (NADP(+)) of Streptococcus suis (strain 98HAH33).